An 82-amino-acid chain; its full sequence is ATP synthase subunit c, chloroplastic (82 aa).

2 consecutive transmembrane segments (helical) span residues 3–23 and 57–77; these read PLIS…ASIG and FAFM…LLFA.

It belongs to the ATPase C chain family. F-type ATPases have 2 components, F(1) - the catalytic core - and F(0) - the membrane proton channel. F(1) has five subunits: alpha(3), beta(3), gamma(1), delta(1), epsilon(1). F(0) has four main subunits: a(1), b(1), b'(1) and c(10-14). The alpha and beta chains form an alternating ring which encloses part of the gamma chain. F(1) is attached to F(0) by a central stalk formed by the gamma and epsilon chains, while a peripheral stalk is formed by the delta, b and b' chains.

The protein resides in the plastid. The protein localises to the chloroplast thylakoid membrane. Functionally, f(1)F(0) ATP synthase produces ATP from ADP in the presence of a proton or sodium gradient. F-type ATPases consist of two structural domains, F(1) containing the extramembraneous catalytic core and F(0) containing the membrane proton channel, linked together by a central stalk and a peripheral stalk. During catalysis, ATP synthesis in the catalytic domain of F(1) is coupled via a rotary mechanism of the central stalk subunits to proton translocation. Key component of the F(0) channel; it plays a direct role in translocation across the membrane. A homomeric c-ring of between 10-14 subunits forms the central stalk rotor element with the F(1) delta and epsilon subunits. In Mesostigma viride (Green alga), this protein is ATP synthase subunit c, chloroplastic.